Reading from the N-terminus, the 287-residue chain is Large ribosomal subunit protein uL2 (287 aa).

Positions 214–287 (LGRRPEVRGS…SKRGRGGRDA (74 aa)) are disordered. Over residues 271-287 (QRRRRKSSKRGRGGRDA) the composition is skewed to basic residues.

It belongs to the universal ribosomal protein uL2 family. Part of the 50S ribosomal subunit. Forms a bridge to the 30S subunit in the 70S ribosome.

One of the primary rRNA binding proteins. Required for association of the 30S and 50S subunits to form the 70S ribosome, for tRNA binding and peptide bond formation. It has been suggested to have peptidyltransferase activity; this is somewhat controversial. Makes several contacts with the 16S rRNA in the 70S ribosome. The sequence is that of Large ribosomal subunit protein uL2 from Synechococcus elongatus (strain ATCC 33912 / PCC 7942 / FACHB-805) (Anacystis nidulans R2).